The primary structure comprises 190 residues: Shikimate kinase (190 aa).

26–31 serves as a coordination point for ATP; that stretch reads GSGKST. A Mg(2+)-binding site is contributed by S30. D48, R72, and G94 together coordinate substrate. R133 contributes to the ATP binding site. Residue R152 participates in substrate binding.

This sequence belongs to the shikimate kinase family. In terms of assembly, monomer. The cofactor is Mg(2+).

It localises to the cytoplasm. It catalyses the reaction shikimate + ATP = 3-phosphoshikimate + ADP + H(+). It participates in metabolic intermediate biosynthesis; chorismate biosynthesis; chorismate from D-erythrose 4-phosphate and phosphoenolpyruvate: step 5/7. Its function is as follows. Catalyzes the specific phosphorylation of the 3-hydroxyl group of shikimic acid using ATP as a cosubstrate. The sequence is that of Shikimate kinase from Prochlorococcus marinus (strain SARG / CCMP1375 / SS120).